The chain runs to 535 residues: BAR/IMD domain-containing adapter protein 2 (535 aa).

One can recognise an IMD domain in the interval 1 to 250 (MSLSRSEEMH…AQLMQQMANS (250 aa)). The stretch at 1–251 (MSLSRSEEMH…QLMQQMANSN (251 aa)) forms a coiled coil. Phosphoserine is present on residues S262, S324, S326, and S337. Positions 308-370 (SEDYNPWADR…TLPRSSSMAA (63 aa)) are disordered. The segment covering 321–335 (QPKSLSPPQSQSKLS) has biased composition (low complexity). Phosphothreonine is present on T341. Phosphoserine is present on S347. Residues 349 to 368 (TPKNSYATTENKTLPRSSSM) are compositionally biased toward polar residues. T361 bears the Phosphothreonine mark. 4 positions are modified to phosphoserine: S367, S385, S396, and S455. The region spanning 375 to 438 (NGRMRVKAIF…PFSYTRVLDS (64 aa)) is the SH3 domain. A disordered region spans residues 445–486 (HMSLQQGKSSSTGNLLDKDDLALPPPDYGTSSRAFPSQTAGT). Polar residues-rich tracts occupy residues 447–458 (SLQQGKSSSTGN) and 473–486 (GTSS…TAGT).

Homodimer. Interacts with CDC42 and RAC1 that have been activated by GTP binding. Binds TIAM1. Interacts with ATN1, ADGRB1, DIAPH1, EPS8, SHANK1, SHANK2, SHANK3, WASF1 and WASF2. Interacts with ENAH after recruitment of CDC42. Post-translationally, phosphorylated on tyrosine residues by INSR in response to insulin treatment. As to expression, ubiquitous.

The protein resides in the cytoplasm. Its subcellular location is the membrane. The protein localises to the cell projection. It is found in the filopodium. It localises to the ruffle. The protein resides in the cytoskeleton. Adapter protein that links membrane-bound small G-proteins to cytoplasmic effector proteins. Necessary for CDC42-mediated reorganization of the actin cytoskeleton and for RAC1-mediated membrane ruffling. Involved in the regulation of the actin cytoskeleton by WASF family members and the Arp2/3 complex. Plays a role in neurite growth. Acts syngeristically with ENAH to promote filipodia formation. Plays a role in the reorganization of the actin cytoskeleton in response to bacterial infection. Participates in actin bundling when associated with EPS8, promoting filopodial protrusions. The protein is BAR/IMD domain-containing adapter protein 2 (Baiap2) of Rattus norvegicus (Rat).